The following is a 291-amino-acid chain: Undecaprenyl-diphosphatase 2 (291 aa).

Transmembrane regions (helical) follow at residues 39 to 59, 85 to 105, 118 to 138, 198 to 218, 231 to 251, and 262 to 282; these read PGAA…LIYF, ARMG…GLTL, ITAT…RMAA, AARY…VFEL, PTLF…AWFM, and FVWY…VGVL.

The protein belongs to the UppP family.

Its subcellular location is the cell membrane. It catalyses the reaction di-trans,octa-cis-undecaprenyl diphosphate + H2O = di-trans,octa-cis-undecaprenyl phosphate + phosphate + H(+). Functionally, catalyzes the dephosphorylation of undecaprenyl diphosphate (UPP). Confers resistance to bacitracin. The protein is Undecaprenyl-diphosphatase 2 of Streptomyces coelicolor (strain ATCC BAA-471 / A3(2) / M145).